Here is a 517-residue protein sequence, read N- to C-terminus: Ribose import ATP-binding protein RbsA 2 (517 aa).

ABC transporter domains follow at residues 10–245 (LRIE…GRSI) and 255–498 (DAGE…VSTH). Position 42–49 (42–49 (GENGAGKS)) interacts with ATP. Residues 497–517 (THTGNSPHSGGTDGTEASRGH) form a disordered region.

It belongs to the ABC transporter superfamily. Ribose importer (TC 3.A.1.2.1) family. In terms of assembly, the complex is composed of an ATP-binding protein (RbsA), two transmembrane proteins (RbsC) and a solute-binding protein (RbsB).

It is found in the cell membrane. The catalysed reaction is D-ribose(out) + ATP + H2O = D-ribose(in) + ADP + phosphate + H(+). Its function is as follows. Part of the ABC transporter complex RbsABC involved in ribose import. Responsible for energy coupling to the transport system. The protein is Ribose import ATP-binding protein RbsA 2 of Streptomyces coelicolor (strain ATCC BAA-471 / A3(2) / M145).